We begin with the raw amino-acid sequence, 259 residues long: Type III pantothenate kinase (259 aa).

6–13 provides a ligand contact to ATP; it reads DIGNTNIT. 113-116 contributes to the substrate binding site; that stretch reads GADR. The Proton acceptor role is filled by aspartate 115. Aspartate 135 serves as a coordination point for K(+). Threonine 138 provides a ligand contact to ATP. Threonine 190 contacts substrate.

It belongs to the type III pantothenate kinase family. In terms of assembly, homodimer. Requires NH4(+) as cofactor. The cofactor is K(+).

The protein resides in the cytoplasm. It carries out the reaction (R)-pantothenate + ATP = (R)-4'-phosphopantothenate + ADP + H(+). The protein operates within cofactor biosynthesis; coenzyme A biosynthesis; CoA from (R)-pantothenate: step 1/5. Functionally, catalyzes the phosphorylation of pantothenate (Pan), the first step in CoA biosynthesis. This chain is Type III pantothenate kinase, found in Endomicrobium trichonymphae.